Consider the following 540-residue polypeptide: CTP synthase (540 aa).

An amidoligase domain region spans residues 1-265 (MVRFIFITGG…DNKVLKFFNL (265 aa)). Ser13 is a binding site for CTP. Residue Ser13 participates in UTP binding. Residues 14–19 (SLGKGL) and Asp71 contribute to the ATP site. Mg(2+) is bound by residues Asp71 and Glu139. Residues 146–148 (DIE), 186–191 (KTKPTQ), and Lys222 each bind CTP. UTP-binding positions include 186–191 (KTKPTQ) and Lys222. In terms of domain architecture, Glutamine amidotransferase type-1 spans 290 to 539 (RIAIIAKYHK…VEAAIKYNKN (250 aa)). Gly352 contacts L-glutamine. Cys379 (nucleophile; for glutamine hydrolysis) is an active-site residue. L-glutamine contacts are provided by residues 380-383 (LGMQ), Glu403, and Arg467. Residues His512 and Glu514 contribute to the active site.

It belongs to the CTP synthase family. In terms of assembly, homotetramer.

It catalyses the reaction UTP + L-glutamine + ATP + H2O = CTP + L-glutamate + ADP + phosphate + 2 H(+). The enzyme catalyses L-glutamine + H2O = L-glutamate + NH4(+). The catalysed reaction is UTP + NH4(+) + ATP = CTP + ADP + phosphate + 2 H(+). Its pathway is pyrimidine metabolism; CTP biosynthesis via de novo pathway; CTP from UDP: step 2/2. Its activity is regulated as follows. Allosterically activated by GTP, when glutamine is the substrate; GTP has no effect on the reaction when ammonia is the substrate. The allosteric effector GTP functions by stabilizing the protein conformation that binds the tetrahedral intermediate(s) formed during glutamine hydrolysis. Inhibited by the product CTP, via allosteric rather than competitive inhibition. Its function is as follows. Catalyzes the ATP-dependent amination of UTP to CTP with either L-glutamine or ammonia as the source of nitrogen. Regulates intracellular CTP levels through interactions with the four ribonucleotide triphosphates. The sequence is that of CTP synthase from Rickettsia bellii (strain RML369-C).